We begin with the raw amino-acid sequence, 106 residues long: Nucleoid-associated protein Nham_0463 (106 aa).

This sequence belongs to the YbaB/EbfC family. As to quaternary structure, homodimer.

It is found in the cytoplasm. It localises to the nucleoid. Binds to DNA and alters its conformation. May be involved in regulation of gene expression, nucleoid organization and DNA protection. This is Nucleoid-associated protein Nham_0463 from Nitrobacter hamburgensis (strain DSM 10229 / NCIMB 13809 / X14).